The primary structure comprises 633 residues: Pesticidal crystal protein Cry2Ab (633 aa).

This sequence belongs to the delta endotoxin family.

Its function is as follows. Promotes colloidosmotic lysis by binding to the midgut epithelial cells of lepidopteran (Manduca sexta) larvae. This Bacillus thuringiensis subsp. kurstaki protein is Pesticidal crystal protein Cry2Ab (cry2Ab).